Here is a 278-residue protein sequence, read N- to C-terminus: Ubiquinone biosynthesis protein COQ4, mitochondrial (278 aa).

A mitochondrion-targeting transit peptide spans methionine 1–phenylalanine 28. Residues histidine 164, aspartate 165, histidine 168, and glutamate 180 each contribute to the Zn(2+) site.

The protein belongs to the COQ4 family. As to quaternary structure, component of a multi-subunit COQ enzyme complex, composed of at least COQ3, COQ4, COQ5, COQ6, COQ7 and COQ9. The cofactor is Zn(2+).

It localises to the mitochondrion inner membrane. The enzyme catalyses a 4-hydroxy-3-methoxy-5-(all-trans-polyprenyl)benzoate + H(+) = a 2-methoxy-6-(all-trans-polyprenyl)phenol + CO2. The protein operates within cofactor biosynthesis; ubiquinone biosynthesis. Lyase that catalyzes the C1-decarboxylation of 4-hydroxy-3-methoxy-5-(all-trans-polyprenyl)benzoic acid into 2-methoxy-6-(all-trans-polyprenyl)phenol during ubiquinone biosynthesis. The protein is Ubiquinone biosynthesis protein COQ4, mitochondrial of Uncinocarpus reesii (strain UAMH 1704).